Here is a 2360-residue protein sequence, read N- to C-terminus: Nucleoprotein TPR (2360 aa).

Alanine 2 bears the N-acetylalanine mark. The sufficient for interaction with TPR stretch occupies residues 3–13; sequence AVLQQVLERPE. Positions 14-117 are necessary for interaction with HSF1; it reads LNKLPKSTQN…GIQSQFTRAK (104 aa). The stretch at 24–370 forms a coiled coil; sequence KLEKFLAEQQ…SATKRKGAIL (347 aa). N6-acetyllysine occurs at positions 252, 312, and 345. Serine 379 is modified (phosphoserine). Residues 423 to 603 are a coiled coil; that stretch reads LDEIVKEVEA…RESRQHQMQL (181 aa). N6-acetyllysine is present on residues lysine 428, lysine 457, and lysine 477. The necessary for association to the NPC stretch occupies residues 437-513; that stretch reads LKRQREEYER…LMELEEARGN (77 aa). A phosphoserine mark is found at serine 522, serine 523, and serine 632. Residues 664–1172 adopt a coiled-coil conformation; it reads ETIEAKAALK…IEKLSDKVVT (509 aa). An N6-acetyllysine mark is found at lysine 713, lysine 723, lysine 748, and lysine 755. Polar residues predominate over residues 915–924; that stretch reads LASQSTQRTG. The tract at residues 915–939 is disordered; that stretch reads LASQSTQRTGKGQPGDRDDVDDLKS. Over residues 928–939 the composition is skewed to basic and acidic residues; sequence PGDRDDVDDLKS. 2 positions are modified to phosphoserine: serine 1180 and serine 1185. Coiled-coil stretches lie at residues 1215-1420 and 1472-1629; these read EVAQ…LDAK and VQEM…QRDE. Residues 1218–1320 form a necessary for interaction with HSF1 region; sequence QVESLRYRQR…NAELSEKSGM (103 aa). Disordered regions lie at residues 1479 to 1520 and 1618 to 1673; these read KDNL…TAQL and EHQE…PTPV. 2 stretches are compositionally biased toward basic and acidic residues: residues 1503–1512 and 1618–1630; these read LSEKETEARS and EHQE…RDEP. Residues 1632 to 1651 show a composition bias toward polar residues; that stretch reads EPTNKAPEQQRQITLKTTPA. Residue lysine 1689 is modified to N6-acetyllysine. A Phosphothreonine modification is found at threonine 1691. Over residues 1801–1826 the composition is skewed to polar residues; it reads QSSPVERPSTSTAVFGTVSATPSSSL. Positions 1801-2122 are disordered; that stretch reads QSSPVERPST…TPGIGGMQQH (322 aa). Positions 1811–1866 are sufficient and essential for mediating its nuclear import; the sequence is STAVFGTVSATPSSSLPKRAREEEEDSTIEAGDQVSDDTVEMPLPKKLKTVTPVGT. A compositionally biased stretch (acidic residues) spans 1866–1880; it reads TEEEVMAEESTDGEA. Residues 1881 to 1892 are compositionally biased toward polar residues; the sequence is ETQTYNQDSQDS. Residue serine 1892 is modified to Phosphoserine. A compositionally biased stretch (low complexity) spans 1923 to 1934; the sequence is QSDQQTTSSQDG. 2 stretches are compositionally biased toward acidic residues: residues 1945 to 1986 and 1996 to 2017; these read DSDD…EDSN and DGYE…ETEE. Over residues 2023-2061 the composition is skewed to polar residues; sequence ESNQRAADSQNSGEGNTSAAESSFSQEVAREQQPTSASE. Phosphoserine is present on residues serine 2031, serine 2034, serine 2045, serine 2047, and serine 2070. Residues arginine 2103 and arginine 2108 each carry the omega-N-methylarginine modification. 2 positions are modified to phosphothreonine: threonine 2113 and threonine 2134. Serine 2152 bears the Phosphoserine mark. Arginine 2160 is subject to Omega-N-methylarginine. Positions 2224–2241 are enriched in polar residues; sequence ESTTSDASEHASQSVPMV. A disordered region spans residues 2224–2360; the sequence is ESTTSDASEH…RGGINRGNIN (137 aa). Residues 2242–2254 show a composition bias toward low complexity; it reads TTSTGTLSTTNET. 2 stretches are compositionally biased toward acidic residues: residues 2256-2269 and 2282-2296; these read AGDD…ETES and SQQE…DESD. The segment covering 2297–2317 has biased composition (low complexity); it reads LPSTSQDPPSSSSVDTSSSQP. Asymmetric dimethylarginine occurs at positions 2340, 2342, and 2351. Positions 2349–2360 are enriched in gly residues; it reads GGRGGINRGNIN.

Belongs to the TPR family. In terms of assembly, homodimer. Part of the nuclear pore complex (NPC). Associates with the XPO1/CRM1-mediated nuclear export complex, the Importin alpha/Importin beta receptor and the dynein 1 complex. Interacts (via C-terminal domain) with the KPNB1; the interaction occurs in a RanGTP-dependent manner. Interacts (via C-terminal region and phosphorylated form) with MAPK1/ERK2 (via phosphorylated form); the interaction requires dimerization of MAPK1/ERK2 and increases following EGF stimulation. Interacts with MAPK3/ERK1; the interaction increases following EGF stimulation. Interacts (via coiled coil region) with NUP153; the interaction is direct. Interacts with HSF1; the interaction increases in a stress-responsive manner and stimulates export of stress-induced HSP70 mRNA. Interacts with huntingtin/HTT; the interaction is inhibited by aggregated huntingtin/HTT forms with expanded polyglutamine stretch. Interacts with MAD1L1 (via N-terminal region), MAD2L1, and TTK; the interactions occurs in a microtubule-independent manner. Interacts (via middle region) with DYNLL1. Interacts with DCTN1, dynein, NUP153 and tubulin. Interacts with IFI204 (via C-terminal region). Interacts with IFI203. Interacts with MTA1. Interacts with ZC3HC1; this interaction mediates ZC3HC1 nuclear envelopes (NE)-association but also required for proper positioning of a substantial amount of TPR at the nuclear basket (NB). In terms of processing, phosphorylated. Phosphorylation occurs on serine and threonine residues (comprised in the C-terminal region) by MAPK1/ERK2 and stabilizes the interaction between these two proteins.

The protein resides in the nucleus. The protein localises to the nucleus membrane. Its subcellular location is the nucleus envelope. It localises to the nuclear pore complex. It is found in the cytoplasm. The protein resides in the cytoskeleton. The protein localises to the spindle. Its subcellular location is the chromosome. It localises to the centromere. It is found in the kinetochore. Component of the nuclear pore complex (NPC), a complex required for the trafficking across the nuclear envelope. Functions as a scaffolding element in the nuclear phase of the NPC essential for normal nucleocytoplasmic transport of proteins and mRNAs, plays a role in the establishment of nuclear-peripheral chromatin compartmentalization in interphase, and in the mitotic spindle checkpoint signaling during mitosis. Involved in the quality control and retention of unspliced mRNAs in the nucleus; in association with NUP153, regulates the nuclear export of unspliced mRNA species bearing constitutive transport element (CTE) in a NXF1- and KHDRBS1-independent manner. Negatively regulates both the association of CTE-containing mRNA with large polyribosomes and translation initiation. Does not play any role in Rev response element (RRE)-mediated export of unspliced mRNAs. Implicated in nuclear export of mRNAs transcribed from heat shock gene promoters; associates both with chromatin in the HSP70 promoter and with mRNAs transcribed from this promoter under stress-induced conditions. Modulates the nucleocytoplasmic transport of activated MAPK1/ERK2 and huntingtin/HTT and may serve as a docking site for the XPO1/CRM1-mediated nuclear export complex. Also plays a role as a structural and functional element of the perinuclear chromatin distribution; involved in the formation and/or maintenance of NPC-associated perinuclear heterochromatin exclusion zones (HEZs). Finally, acts as a spatial regulator of the spindle-assembly checkpoint (SAC) response ensuring a timely and effective recruitment of spindle checkpoint proteins like MAD1L1 and MAD2L1 to unattached kinetochore during the metaphase-anaphase transition before chromosome congression. Its N-terminus is involved in activation of oncogenic kinases. Plays a role in the regulation of nuclear protein export. This chain is Nucleoprotein TPR, found in Rattus norvegicus (Rat).